Consider the following 61-residue polypeptide: Small ribosomal subunit protein uS14 (61 aa).

Positions 24, 27, 40, and 43 each coordinate Zn(2+).

Belongs to the universal ribosomal protein uS14 family. Zinc-binding uS14 subfamily. Part of the 30S ribosomal subunit. Contacts proteins S3 and S10. It depends on Zn(2+) as a cofactor.

In terms of biological role, binds 16S rRNA, required for the assembly of 30S particles and may also be responsible for determining the conformation of the 16S rRNA at the A site. This is Small ribosomal subunit protein uS14 from Thermoanaerobacter sp. (strain X514).